A 476-amino-acid chain; its full sequence is Serine/threonine-protein kinase PknF (476 aa).

Positions 12–279 (FTIVRQLGSG…FARALGHRLG (268 aa)) constitute a Protein kinase domain. ATP contacts are provided by residues 18 to 26 (LGSGGMGEV) and Lys41. Asp137 (proton acceptor) is an active-site residue. A helical membrane pass occupies residues 306–326 (TAVIVPAVLAMLLVMAVAVAV). The interval 332-376 (ADDERAAQPARTRTTTSAGTTTSVAPASTTRPAPTTPTTTGAADT) is disordered. Low complexity predominate over residues 338–376 (AQPARTRTTTSAGTTTSVAPASTTRPAPTTPTTTGAADT).

It belongs to the protein kinase superfamily. Ser/Thr protein kinase family. Post-translationally, autophosphorylated. Dephosphorylated by PstP.

It localises to the cell membrane. The enzyme catalyses L-seryl-[protein] + ATP = O-phospho-L-seryl-[protein] + ADP + H(+). It carries out the reaction L-threonyl-[protein] + ATP = O-phospho-L-threonyl-[protein] + ADP + H(+). A serine/threonine-protein kinase, acts on HupB in vitro. In Mycobacterium tuberculosis (strain ATCC 25177 / H37Ra), this protein is Serine/threonine-protein kinase PknF.